The sequence spans 198 residues: Clytin (198 aa).

The propeptide occupies methionine 1–alanine 9. EF-hand domains follow at residues lysine 20–alanine 55, threonine 60–tryptophan 95, glutamate 119–cysteine 148, and serine 149–threonine 184. The Ca(2+) site is built by aspartate 33, asparagine 35, aspartate 37, lysine 39, and glutamate 44. Residues aspartate 126, aspartate 128, serine 130, serine 132, glutamate 137, aspartate 162, aspartate 164, serine 166, lysine 168, and glutamate 173 each contribute to the Ca(2+) site.

Belongs to the aequorin family.

Ca(2+)-dependent bioluminescence photoprotein. Displays an emission peak at 470 nm (blue light). Trace amounts of calcium ion trigger the intramolecular oxidation of the chromophore, coelenterazine into coelenteramide and CO(2) with the concomitant emission of light. The sequence is that of Clytin from Clytia gregaria (Gregarious jellyfish).